Consider the following 230-residue polypeptide: Proteasome subunit alpha (230 aa).

It belongs to the peptidase T1A family. In terms of assembly, the 20S proteasome core is composed of 14 alpha and 14 beta subunits that assemble into four stacked heptameric rings, resulting in a barrel-shaped structure. The two inner rings, each composed of seven catalytic beta subunits, are sandwiched by two outer rings, each composed of seven alpha subunits. The catalytic chamber with the active sites is on the inside of the barrel. Has a gated structure, the ends of the cylinder being occluded by the N-termini of the alpha-subunits. Is capped by the proteasome-associated ATPase, ARC.

The protein resides in the cytoplasm. It functions in the pathway protein degradation; proteasomal Pup-dependent pathway. The formation of the proteasomal ATPase ARC-20S proteasome complex, likely via the docking of the C-termini of ARC into the intersubunit pockets in the alpha-rings, may trigger opening of the gate for substrate entry. Interconversion between the open-gate and close-gate conformations leads to a dynamic regulation of the 20S proteasome proteolysis activity. In terms of biological role, component of the proteasome core, a large protease complex with broad specificity involved in protein degradation. In Thermomonospora curvata (strain ATCC 19995 / DSM 43183 / JCM 3096 / KCTC 9072 / NBRC 15933 / NCIMB 10081 / Henssen B9), this protein is Proteasome subunit alpha.